Here is a 472-residue protein sequence, read N- to C-terminus: F420-non-reducing hydrogenase subunit A (472 aa).

Ni(2+)-binding residues include C61, C64, C442, and C445.

Belongs to the [NiFe]/[NiFeSe] hydrogenase large subunit family. In terms of assembly, the F420-non-reducing hydrogenase is composed of three subunits; MvhA, MvhD and MvhG. It forms a complex with the heterodisulfide reductase (hdr). Ni(2+) is required as a cofactor.

In terms of biological role, part of a complex that provides reducing equivalents for heterodisulfide reductase. The polypeptide is F420-non-reducing hydrogenase subunit A (mvhA) (Methanothermobacter thermautotrophicus (strain ATCC 29096 / DSM 1053 / JCM 10044 / NBRC 100330 / Delta H) (Methanobacterium thermoautotrophicum)).